The chain runs to 340 residues: Ribosomal RNA large subunit methyltransferase F (340 aa).

Belongs to the methyltransferase superfamily. METTL16/RlmF family.

It localises to the cytoplasm. The catalysed reaction is adenosine(1618) in 23S rRNA + S-adenosyl-L-methionine = N(6)-methyladenosine(1618) in 23S rRNA + S-adenosyl-L-homocysteine + H(+). Its function is as follows. Specifically methylates the adenine in position 1618 of 23S rRNA. The sequence is that of Ribosomal RNA large subunit methyltransferase F from Dechloromonas aromatica (strain RCB).